A 473-amino-acid polypeptide reads, in one-letter code: UDP-N-acetylmuramate--L-alanine ligase (473 aa).

Position 123–129 (123–129 (GTHGKTT)) interacts with ATP.

It belongs to the MurCDEF family.

It is found in the cytoplasm. The catalysed reaction is UDP-N-acetyl-alpha-D-muramate + L-alanine + ATP = UDP-N-acetyl-alpha-D-muramoyl-L-alanine + ADP + phosphate + H(+). The protein operates within cell wall biogenesis; peptidoglycan biosynthesis. In terms of biological role, cell wall formation. This Marinomonas sp. (strain MWYL1) protein is UDP-N-acetylmuramate--L-alanine ligase.